Reading from the N-terminus, the 110-residue chain is Large ribosomal subunit protein uL22 (110 aa).

This sequence belongs to the universal ribosomal protein uL22 family. As to quaternary structure, part of the 50S ribosomal subunit.

In terms of biological role, this protein binds specifically to 23S rRNA; its binding is stimulated by other ribosomal proteins, e.g. L4, L17, and L20. It is important during the early stages of 50S assembly. It makes multiple contacts with different domains of the 23S rRNA in the assembled 50S subunit and ribosome. The globular domain of the protein is located near the polypeptide exit tunnel on the outside of the subunit, while an extended beta-hairpin is found that lines the wall of the exit tunnel in the center of the 70S ribosome. The polypeptide is Large ribosomal subunit protein uL22 (Hahella chejuensis (strain KCTC 2396)).